The sequence spans 1887 residues: DNA-directed RNA polymerase II subunit RPB1 (1887 aa).

The Zn(2+) site is built by Cys-67, Cys-70, Cys-77, His-80, Cys-107, Cys-110, Cys-150, and Cys-176. The interval 156-178 (MDLTKENQQPDPNKKPGHGGCGH) is disordered. Residues Asp-487, Asp-489, and Asp-491 each coordinate Mg(2+). The bridging helix stretch occupies residues 825–837 (PSEFYFHAMGGRE). Lys-1260 is covalently cross-linked (Glycyl lysine isopeptide (Lys-Gly) (interchain with G-Cter in ubiquitin)). 2 disordered regions span residues 1528 to 1565 (TPGGPSFSPSAASDASGMSPSWSPAHPGSSPSSPGPSM) and 1579 to 1887 (YSPT…ESED). Composition is skewed to low complexity over residues 1529–1565 (PGGPSFSPSAASDASGMSPSWSPAHPGSSPSSPGPSM), 1579–1610 (YSPTSPNYTASSPGGASPNYSPSSPNYSPTSP), and 1626–1650 (PQSTGYSPSSSGYSPTSPVYSPTVQ). Repeat 1 spans residues 1579 to 1585 (YSPTSPN). The segment at 1579–1881 (YSPTSPNYTA…SPAYSPSSPT (303 aa)) is C-terminal domain (CTD); 32 X 7 AA approximate tandem repeats of Y-[ST]-P-[STNVAPGN]-[STGMA]-[PSTR]-[SNAGCQKTLRIMH]. Residues 1586 to 1592 (YTASSPG) form a 2; approximate repeat. 4 consecutive repeat copies span residues 1598–1604 (YSPSSPN), 1605–1611 (YSPTSPL), 1631–1637 (YSPSSSG), and 1638–1644 (YSPTSPV). The segment covering 1651-1664 (FQSSPSFAGSGSNI) has biased composition (polar residues). Over residues 1665–1760 (YSPGNAYSPS…GVKYSPTSPT (96 aa)) the composition is skewed to low complexity. 17 repeat units span residues 1671 to 1677 (YSPSSSN), 1678 to 1684 (YSPNSPS), 1685 to 1691 (YSPTSPS), 1692 to 1698 (YSPSSPS), 1699 to 1705 (YSPTSPC), 1706 to 1712 (YSPTSPS), 1713 to 1719 (YSPTSPN), 1720 to 1726 (YTPVTPS), 1727 to 1733 (YSPTSPN), 1740 to 1746 (YSPASPA), 1754 to 1760 (YSPTSPT), 1761 to 1767 (YSPPSPS), 1777 to 1783 (YTPGSPQ), 1784 to 1790 (YSPASPK), 1791 to 1797 (YSPTSPL), 1798 to 1804 (YSPSSPQ), and 1811 to 1817 (YSPTGST). The span at 1776–1786 (QYTPGSPQYSP) shows a compositional bias: polar residues. The segment covering 1788 to 1813 (SPKYSPTSPLYSPSSPQHSPSNQYSP) has biased composition (low complexity). Polar residues predominate over residues 1814–1831 (TGSTYSATSPRYSPNMSI). The 24; approximate repeat unit spans residues 1818–1824 (YSATSPR). Tandem repeats lie at residues 1825 to 1831 (YSPNMSI), 1832 to 1838 (YSPSSTK), 1839 to 1845 (YSPTSPT), 1846 to 1852 (YTPTARN), 1853 to 1859 (YSPTSPM), 1860 to 1866 (YSPTAPS), 1868 to 1874 (YSPTSPA), and 1875 to 1881 (YSPSSPT). Low complexity predominate over residues 1832–1849 (YSPSSTKYSPTSPTYTPT). Polar residues predominate over residues 1850-1859 (ARNYSPTSPM). Positions 1860–1881 (YSPTAPSHYSPTSPAYSPSSPT) are enriched in low complexity.

It belongs to the RNA polymerase beta' chain family. Component of the RNA polymerase II (Pol II) complex consisting of 12 subunits. Post-translationally, the tandem 7 residues repeats in the C-terminal domain (CTD) can be highly phosphorylated. The phosphorylation activates Pol II. Phosphorylation occurs mainly at residues 'Ser-2' and 'Ser-5' of the heptapeptide repeat. The phosphorylation state is believed to result from the balanced action of site-specific CTD kinases and phosphatase, and a 'CTD code' that specifies the position of Pol II within the transcription cycle has been proposed. In terms of processing, following transcription stress, the elongating form of RNA polymerase II (RNA pol IIo) is polyubiquitinated via 'Lys-63'-linkages on Lys-1260 at DNA damage sites without leading to degradation: ubiquitination promotes RNA pol IIo backtracking to allow access by the transcription-coupled nucleotide excision repair (TC-NER) machinery. Subsequent DEF1-dependent polyubiquitination by the elongin complex via 'Lys-48'-linkages may lead to proteasome-mediated degradation; presumably at stalled RNA pol II where TC-NER has failed, to halt global transcription and enable 'last resort' DNA repair pathways.

It localises to the nucleus. The catalysed reaction is RNA(n) + a ribonucleoside 5'-triphosphate = RNA(n+1) + diphosphate. DNA-dependent RNA polymerase catalyzes the transcription of DNA into RNA using the four ribonucleoside triphosphates as substrates. Largest and catalytic component of RNA polymerase II which synthesizes mRNA precursors and many functional non-coding RNAs. Forms the polymerase active center together with the second largest subunit. Pol II is the central component of the basal RNA polymerase II transcription machinery. It is composed of mobile elements that move relative to each other. RPB1 is part of the core element with the central large cleft, the clamp element that moves to open and close the cleft and the jaws that are thought to grab the incoming DNA template. At the start of transcription, a single-stranded DNA template strand of the promoter is positioned within the central active site cleft of Pol II. A bridging helix emanates from RPB1 and crosses the cleft near the catalytic site and is thought to promote translocation of Pol II by acting as a ratchet that moves the RNA-DNA hybrid through the active site by switching from straight to bent conformations at each step of nucleotide addition. During transcription elongation, Pol II moves on the template as the transcript elongates. Elongation is influenced by the phosphorylation status of the C-terminal domain (CTD) of Pol II largest subunit (RPB1), which serves as a platform for assembly of factors that regulate transcription initiation, elongation, termination and mRNA processing. This is DNA-directed RNA polymerase II subunit RPB1 from Drosophila melanogaster (Fruit fly).